Reading from the N-terminus, the 91-residue chain is Small ribosomal subunit protein uS19 (91 aa).

Belongs to the universal ribosomal protein uS19 family.

In terms of biological role, protein S19 forms a complex with S13 that binds strongly to the 16S ribosomal RNA. In Methylibium petroleiphilum (strain ATCC BAA-1232 / LMG 22953 / PM1), this protein is Small ribosomal subunit protein uS19.